A 336-amino-acid chain; its full sequence is Probable tRNA N6-adenosine threonylcarbamoyltransferase (336 aa).

Residues histidine 110, histidine 114, and tyrosine 131 each coordinate a divalent metal cation. Residues 131–135 (YVSGG), aspartate 163, glycine 178, glutamate 182, and asparagine 267 contribute to the substrate site. Residue aspartate 295 participates in a divalent metal cation binding.

It belongs to the KAE1 / TsaD family. As to quaternary structure, component of the EKC/KEOPS complex; the whole complex dimerizes. The cofactor is a divalent metal cation.

The protein localises to the cytoplasm. Its subcellular location is the nucleus. The catalysed reaction is L-threonylcarbamoyladenylate + adenosine(37) in tRNA = N(6)-L-threonylcarbamoyladenosine(37) in tRNA + AMP + H(+). Functionally, component of the EKC/KEOPS complex that is required for the formation of a threonylcarbamoyl group on adenosine at position 37 (t(6)A37) in tRNAs that read codons beginning with adenine. The complex is probably involved in the transfer of the threonylcarbamoyl moiety of threonylcarbamoyl-AMP (TC-AMP) to the N6 group of A37. Osgep likely plays a direct catalytic role in this reaction, but requires other protein(s) of the complex to fulfill this activity. The polypeptide is Probable tRNA N6-adenosine threonylcarbamoyltransferase (Dictyostelium discoideum (Social amoeba)).